The following is a 184-amino-acid chain: ATP synthase subunit b, chloroplastic (184 aa).

A helical membrane pass occupies residues 31–53; the sequence is LINLSVVLGVLIYFGKGVLSNLL.

This sequence belongs to the ATPase B chain family. In terms of assembly, F-type ATPases have 2 components, F(1) - the catalytic core - and F(0) - the membrane proton channel. F(1) has five subunits: alpha(3), beta(3), gamma(1), delta(1), epsilon(1). F(0) has four main subunits: a(1), b(1), b'(1) and c(10-14). The alpha and beta chains form an alternating ring which encloses part of the gamma chain. F(1) is attached to F(0) by a central stalk formed by the gamma and epsilon chains, while a peripheral stalk is formed by the delta, b and b' chains.

The protein resides in the plastid. Its subcellular location is the chloroplast thylakoid membrane. F(1)F(0) ATP synthase produces ATP from ADP in the presence of a proton or sodium gradient. F-type ATPases consist of two structural domains, F(1) containing the extramembraneous catalytic core and F(0) containing the membrane proton channel, linked together by a central stalk and a peripheral stalk. During catalysis, ATP synthesis in the catalytic domain of F(1) is coupled via a rotary mechanism of the central stalk subunits to proton translocation. Functionally, component of the F(0) channel, it forms part of the peripheral stalk, linking F(1) to F(0). This chain is ATP synthase subunit b, chloroplastic, found in Cycas taitungensis (Prince sago).